The chain runs to 132 residues: Small ribosomal subunit protein uS8 (132 aa).

The protein belongs to the universal ribosomal protein uS8 family. Part of the 30S ribosomal subunit. Contacts proteins S5 and S12.

One of the primary rRNA binding proteins, it binds directly to 16S rRNA central domain where it helps coordinate assembly of the platform of the 30S subunit. The protein is Small ribosomal subunit protein uS8 of Granulibacter bethesdensis (strain ATCC BAA-1260 / CGDNIH1).